The sequence spans 311 residues: Aspartate carbamoyltransferase catalytic subunit (311 aa).

Positions 59 and 60 each coordinate carbamoyl phosphate. An L-aspartate-binding site is contributed by K87. Carbamoyl phosphate-binding residues include R109, H139, and Q142. L-aspartate-binding residues include R172 and R224. 2 residues coordinate carbamoyl phosphate: A265 and P266.

It belongs to the aspartate/ornithine carbamoyltransferase superfamily. ATCase family. In terms of assembly, heterododecamer (2C3:3R2) of six catalytic PyrB chains organized as two trimers (C3), and six regulatory PyrI chains organized as three dimers (R2).

The catalysed reaction is carbamoyl phosphate + L-aspartate = N-carbamoyl-L-aspartate + phosphate + H(+). The protein operates within pyrimidine metabolism; UMP biosynthesis via de novo pathway; (S)-dihydroorotate from bicarbonate: step 2/3. In terms of biological role, catalyzes the condensation of carbamoyl phosphate and aspartate to form carbamoyl aspartate and inorganic phosphate, the committed step in the de novo pyrimidine nucleotide biosynthesis pathway. This is Aspartate carbamoyltransferase catalytic subunit from Streptococcus pyogenes serotype M4 (strain MGAS10750).